The chain runs to 208 residues: Holliday junction resolvase RecU (208 aa).

The Mg(2+) site is built by T86, D88, E101, and Q120.

It belongs to the RecU family. Mg(2+) serves as cofactor.

It localises to the cytoplasm. It catalyses the reaction Endonucleolytic cleavage at a junction such as a reciprocal single-stranded crossover between two homologous DNA duplexes (Holliday junction).. Endonuclease that resolves Holliday junction intermediates in genetic recombination. Cleaves mobile four-strand junctions by introducing symmetrical nicks in paired strands. Promotes annealing of linear ssDNA with homologous dsDNA. Required for DNA repair, homologous recombination and chromosome segregation. This chain is Holliday junction resolvase RecU, found in Lacticaseibacillus casei (strain BL23) (Lactobacillus casei).